A 500-amino-acid chain; its full sequence is Allene oxide synthase 3 (500 aa).

The interval 1-26 (MAPPPVNSGDAAAAATGEKSKLSPSG) is disordered. Substrate-binding positions include 297-298 (FN), K304, and 365-368 (PVEF). C452 contributes to the heme binding site.

The protein belongs to the cytochrome P450 family. The cofactor is heme. Not expressed in dark-grown seedlings.

The enzyme catalyses (13S)-hydroperoxy-(9Z,11E,15Z)-octadecatrienoate = (9Z,13S,15Z)-12,13-epoxyoctadeca-9,11,15-trienoate + H2O. It functions in the pathway lipid metabolism; oxylipin biosynthesis. In terms of biological role, involved in the biosynthesis of jasmonic acid, a growth regulator that is implicated also as a signaling molecule in plant defense. Converts 13-hydroperoxylinolenic acid to 12,13-epoxylinolenic acid. The sequence is that of Allene oxide synthase 3 (CYP74A3) from Oryza sativa subsp. japonica (Rice).